The chain runs to 47 residues: Delta-actitoxin-Axm1e (47 aa).

Disulfide bonds link Cys-4–Cys-44, Cys-6–Cys-34, and Cys-27–Cys-45.

The protein belongs to the sea anemone sodium channel inhibitory toxin family. Type I subfamily.

Its subcellular location is the secreted. It localises to the nematocyst. Functionally, binds specifically to voltage-gated sodium channels (Nav), thereby delaying their inactivation. This toxin is active on a variety of voltage-gated sodium channels (Nav1.1/SCN1A, Nav1.2/SCN2A, Nav1.3/SCN3A, Nav1.4/SCN4A, Nav1.5/SCN5A and Nav1.6/SCN8A). The chain is Delta-actitoxin-Axm1e from Anthopleura xanthogrammica (Giant green sea anemone).